The primary structure comprises 425 residues: MEPSATPGAQMGVPPGSREPSPVPPDYEDEFLRYLWRDYLYPKQYEWVLIAAYVAVFVVALVGNTLVCLAVWRNHHMRTVTNYFIVNLSLADVLVTAICLPASLLVDITESWLFGHALCKVIPYLQAVSVSVAVLTLSFIALDRWYAICHPLLFKSTARRARGSILGIWAVSLAIMVPQAAVMECSSVLPELANRTRLFSVCDERWADDLYPKIYHSCFFIVTYLAPLGLMAMAYFQIFRKLWGRQIPGTTSALVRNWKRPSDQLGDLEQGLSGEPQPRARAFLAEVKQMRARRKTAKMLMVVLLVFALCYLPISVLNVLKRVFGMFRQASDREAVYACFTFSHWLVYANSAANPIIYNFLSGKFREQFKAAFSCCLPGLGPCGSLKAPSPRSSASHKSLSLQSRCSISKISEHVVLTSVTTVLP.

Residues 1–24 (MEPSATPGAQMGVPPGSREPSPVP) form a disordered region. The Extracellular portion of the chain corresponds to 1–46 (MEPSATPGAQMGVPPGSREPSPVPPDYEDEFLRYLWRDYLYPKQYE). The interval 26–41 (DYEDEFLRYLWRDYLY) is required for response to orexin-A. The chain crosses the membrane as a helical span at residues 47-67 (WVLIAAYVAVFVVALVGNTLV). The Cytoplasmic portion of the chain corresponds to 68 to 82 (CLAVWRNHHMRTVTN). Residues 83-105 (YFIVNLSLADVLVTAICLPASLL) traverse the membrane as a helical segment. Residues 106–119 (VDITESWLFGHALC) lie on the Extracellular side of the membrane. An intrachain disulfide couples C119 to C202. The helical transmembrane segment at 120–140 (KVIPYLQAVSVSVAVLTLSFI) threads the bilayer. Over 141-160 (ALDRWYAICHPLLFKSTARR) the chain is Cytoplasmic. A helical transmembrane segment spans residues 161–182 (ARGSILGIWAVSLAIMVPQAAV). Over 183–213 (MECSSVLPELANRTRLFSVCDERWADDLYPK) the chain is Extracellular. Residue N194 is glycosylated (N-linked (GlcNAc...) asparagine). Residues 214–235 (IYHSCFFIVTYLAPLGLMAMAY) traverse the membrane as a helical segment. The Cytoplasmic segment spans residues 236 to 298 (FQIFRKLWGR…QMRARRKTAK (63 aa)). Residues 299–321 (MLMVVLLVFALCYLPISVLNVLK) form a helical membrane-spanning segment. N318 provides a ligand contact to suvorexant. At 322-336 (RVFGMFRQASDREAV) the chain is on the extracellular side. The chain crosses the membrane as a helical span at residues 337–360 (YACFTFSHWLVYANSAANPIIYNF). The Cytoplasmic portion of the chain corresponds to 361 to 425 (LSGKFREQFK…VLTSVTTVLP (65 aa)).

It belongs to the G-protein coupled receptor 1 family.

The protein resides in the cell membrane. Functionally, moderately selective excitatory receptor for orexin-A and, with a lower affinity, for orexin-B neuropeptide. Triggers an increase in cytoplasmic Ca(2+) levels in response to orexin-A binding. This is Orexin/Hypocretin receptor type 1 from Homo sapiens (Human).